The chain runs to 377 residues: Fructose-bisphosphate aldolase 1, chloroplastic (377 aa).

Substrate-binding residues include R74 and K164. Catalysis depends on E204, which acts as the Proton acceptor. Catalysis depends on K246, which acts as the Schiff-base intermediate with dihydroxyacetone-P.

The protein belongs to the class I fructose-bisphosphate aldolase family.

Its subcellular location is the plastid. It is found in the chloroplast. It catalyses the reaction beta-D-fructose 1,6-bisphosphate = D-glyceraldehyde 3-phosphate + dihydroxyacetone phosphate. The protein operates within carbohydrate degradation; glycolysis; D-glyceraldehyde 3-phosphate and glycerone phosphate from D-glucose: step 4/4. In Chlamydomonas reinhardtii (Chlamydomonas smithii), this protein is Fructose-bisphosphate aldolase 1, chloroplastic (ALDCHL).